The primary structure comprises 430 residues: Glutamate-1-semialdehyde 2,1-aminomutase (430 aa).

Residue lysine 265 is modified to N6-(pyridoxal phosphate)lysine.

It belongs to the class-III pyridoxal-phosphate-dependent aminotransferase family. HemL subfamily. In terms of assembly, homodimer. Pyridoxal 5'-phosphate is required as a cofactor.

It is found in the cytoplasm. The enzyme catalyses (S)-4-amino-5-oxopentanoate = 5-aminolevulinate. It functions in the pathway porphyrin-containing compound metabolism; protoporphyrin-IX biosynthesis; 5-aminolevulinate from L-glutamyl-tRNA(Glu): step 2/2. This is Glutamate-1-semialdehyde 2,1-aminomutase from Shewanella baltica (strain OS223).